A 93-amino-acid polypeptide reads, in one-letter code: Beta-defensin 128 (93 aa).

An N-terminal signal peptide occupies residues 1 to 18; sequence MKLFLVLIILLFEVLTDG. Disulfide bonds link C24-C52, C32-C46, and C36-C53.

The protein belongs to the beta-defensin family.

It is found in the secreted. Functionally, has antibacterial activity. The sequence is that of Beta-defensin 128 (DEFB128) from Macaca fascicularis (Crab-eating macaque).